Consider the following 184-residue polypeptide: Peptidyl-tRNA hydrolase (184 aa).

Tyr14 provides a ligand contact to tRNA. His19 (proton acceptor) is an active-site residue. Residues Phe64, Asn66, and Asn112 each contribute to the tRNA site.

This sequence belongs to the PTH family. Monomer.

It is found in the cytoplasm. The enzyme catalyses an N-acyl-L-alpha-aminoacyl-tRNA + H2O = an N-acyl-L-amino acid + a tRNA + H(+). Its function is as follows. Hydrolyzes ribosome-free peptidyl-tRNAs (with 1 or more amino acids incorporated), which drop off the ribosome during protein synthesis, or as a result of ribosome stalling. Catalyzes the release of premature peptidyl moieties from peptidyl-tRNA molecules trapped in stalled 50S ribosomal subunits, and thus maintains levels of free tRNAs and 50S ribosomes. This Listeria welshimeri serovar 6b (strain ATCC 35897 / DSM 20650 / CCUG 15529 / CIP 8149 / NCTC 11857 / SLCC 5334 / V8) protein is Peptidyl-tRNA hydrolase.